A 145-amino-acid chain; its full sequence is Maximins 3/H11 type 3 (145 aa).

The signal sequence occupies residues 1–18 (MNFKYIVAVSFLIASAYA). 2 propeptides span residues 19 to 43 (RSVQ…LREI) and 75 to 122 (TAEE…TKKE). Isoleucine amide is present on Ile-144.

It belongs to the bombinin family. Expressed by the skin glands.

The protein resides in the secreted. Functionally, maximin-3 shows antibacterial activity against both Gram-positive and Gram-negative bacteria. It also shows antimicrobial activity against the fungus C.albicans, but not against A.flavus nor P.uticale. It has little hemolytic activity. It possess a significant cytotoxicity against tumor cell lines. It possess a significant anti-HIV activity. It shows high spermicidal activity. Its function is as follows. Maximin-H11 shows antimicrobial activity against bacteria and against the fungus C.albicans. Shows strong hemolytic activity. This chain is Maximins 3/H11 type 3, found in Bombina maxima (Giant fire-bellied toad).